Reading from the N-terminus, the 70-residue chain is Large ribosomal subunit protein bL31 (70 aa).

Zn(2+)-binding residues include Cys16, Cys18, Cys38, and Cys41.

It belongs to the bacterial ribosomal protein bL31 family. Type A subfamily. Part of the 50S ribosomal subunit. The cofactor is Zn(2+).

Functionally, binds the 23S rRNA. The chain is Large ribosomal subunit protein bL31 from Bifidobacterium longum (strain DJO10A).